The following is a 146-amino-acid chain: MKLHELKAAEGSRRVRNRVGRGAGSGNGKTSGRGQKGQKARSGGGVRPGFEGGQLPLFRRLPKRGFTNINRKEYAIVNLDQLNKFEDGTEVTPALLVETGVVKNEKSGIKVLGNGSLDKKLTVKAHKFSASAVEAIDAKGGAHEVI.

Residues 1-13 (MKLHELKAAEGSR) are compositionally biased toward basic and acidic residues. The tract at residues 1-56 (MKLHELKAAEGSRRVRNRVGRGAGSGNGKTSGRGQKGQKARSGGGVRPGFEGGQLP) is disordered. Composition is skewed to gly residues over residues 21–35 (RGAG…GRGQ) and 42–52 (SGGGVRPGFEG).

The protein belongs to the universal ribosomal protein uL15 family. Part of the 50S ribosomal subunit.

Its function is as follows. Binds to the 23S rRNA. In Staphylococcus haemolyticus (strain JCSC1435), this protein is Large ribosomal subunit protein uL15.